A 396-amino-acid chain; its full sequence is Acetate kinase (396 aa).

Residue asparagine 7 participates in Mg(2+) binding. Lysine 14 is a binding site for ATP. Arginine 88 provides a ligand contact to substrate. Aspartate 145 serves as the catalytic Proton donor/acceptor. ATP-binding positions include histidine 205 to glycine 209, aspartate 279 to arginine 281, and glycine 327 to asparagine 331. Glutamate 381 contacts Mg(2+).

It belongs to the acetokinase family. Homodimer. It depends on Mg(2+) as a cofactor. The cofactor is Mn(2+).

It localises to the cytoplasm. The enzyme catalyses acetate + ATP = acetyl phosphate + ADP. Its pathway is metabolic intermediate biosynthesis; acetyl-CoA biosynthesis; acetyl-CoA from acetate: step 1/2. Its function is as follows. Catalyzes the formation of acetyl phosphate from acetate and ATP. Can also catalyze the reverse reaction. This is Acetate kinase from Campylobacter jejuni subsp. doylei (strain ATCC BAA-1458 / RM4099 / 269.97).